The sequence spans 76 residues: Tautomerase PptA (76 aa).

The active-site Proton acceptor; via imino nitrogen is the proline 2.

Belongs to the 4-oxalocrotonate tautomerase family. PptA subfamily. Homodimer.

Its subcellular location is the cytoplasm. This is Tautomerase PptA from Enterobacter sp. (strain 638).